A 503-amino-acid chain; its full sequence is Na(+)-translocating NADH-quinone reductase subunit B (503 aa).

4 helical membrane-spanning segments follow: residues 55 to 75 (MMLV…NSGI), 120 to 140 (IFLP…VLFA), 161 to 181 (TLPP…GVVV), and 186 to 206 (FGGT…FLFF). Position 248 is an FMN phosphoryl threonine (Thr248). Transmembrane regions (helical) follow at residues 361 to 381 (TSTF…IASW), 387 to 407 (FGIG…LIAG), 417 to 437 (FFIP…LVFM), 452 to 472 (WIYG…NPAY), and 475 to 495 (GVML…YFAV).

The protein belongs to the NqrB/RnfD family. As to quaternary structure, composed of six subunits; NqrA, NqrB, NqrC, NqrD, NqrE and NqrF. Requires FMN as cofactor.

It localises to the cell inner membrane. It catalyses the reaction a ubiquinone + n Na(+)(in) + NADH + H(+) = a ubiquinol + n Na(+)(out) + NAD(+). NQR complex catalyzes the reduction of ubiquinone-1 to ubiquinol by two successive reactions, coupled with the transport of Na(+) ions from the cytoplasm to the periplasm. NqrA to NqrE are probably involved in the second step, the conversion of ubisemiquinone to ubiquinol. The protein is Na(+)-translocating NADH-quinone reductase subunit B of Chlamydia abortus (strain DSM 27085 / S26/3) (Chlamydophila abortus).